Reading from the N-terminus, the 317-residue chain is Methionyl-tRNA formyltransferase (317 aa).

112 to 115 (SILP) serves as a coordination point for (6S)-5,6,7,8-tetrahydrofolate.

The protein belongs to the Fmt family.

It carries out the reaction L-methionyl-tRNA(fMet) + (6R)-10-formyltetrahydrofolate = N-formyl-L-methionyl-tRNA(fMet) + (6S)-5,6,7,8-tetrahydrofolate + H(+). Its function is as follows. Attaches a formyl group to the free amino group of methionyl-tRNA(fMet). The formyl group appears to play a dual role in the initiator identity of N-formylmethionyl-tRNA by promoting its recognition by IF2 and preventing the misappropriation of this tRNA by the elongation apparatus. The sequence is that of Methionyl-tRNA formyltransferase from Mannheimia succiniciproducens (strain KCTC 0769BP / MBEL55E).